The primary structure comprises 251 residues: Adenosylcobinamide-GDP ribazoletransferase (251 aa).

7 consecutive transmembrane segments (helical) span residues Leu36 to Ser56, Val60 to Leu80, Val110 to Phe130, Val141 to Glu161, Glu181 to Ile201, Asn202 to Lys222, and Asp231 to Ile251.

It belongs to the CobS family. Requires Mg(2+) as cofactor.

The protein localises to the cell membrane. The enzyme catalyses alpha-ribazole + adenosylcob(III)inamide-GDP = adenosylcob(III)alamin + GMP + H(+). The catalysed reaction is alpha-ribazole 5'-phosphate + adenosylcob(III)inamide-GDP = adenosylcob(III)alamin 5'-phosphate + GMP + H(+). It functions in the pathway cofactor biosynthesis; adenosylcobalamin biosynthesis; adenosylcobalamin from cob(II)yrinate a,c-diamide: step 7/7. Functionally, joins adenosylcobinamide-GDP and alpha-ribazole to generate adenosylcobalamin (Ado-cobalamin). Also synthesizes adenosylcobalamin 5'-phosphate from adenosylcobinamide-GDP and alpha-ribazole 5'-phosphate. In Clostridium perfringens (strain 13 / Type A), this protein is Adenosylcobinamide-GDP ribazoletransferase.